Consider the following 628-residue polypeptide: Methionine--tRNA ligase (628 aa).

A 'HIGH' region motif is present at residues 9-19 (YYVNDVPHLGH). Zn(2+) contacts are provided by Cys-124, Cys-127, Cys-142, and Cys-145. The short motif at 294–298 (KMSKS) is the 'KMSKS' region element. Lys-297 contributes to the ATP binding site. One can recognise a tRNA-binding domain in the interval 527-628 (DFAKIEIKVA…QLVQNGSLVG (102 aa)).

Belongs to the class-I aminoacyl-tRNA synthetase family. MetG type 2A subfamily. As to quaternary structure, homodimer. Requires Zn(2+) as cofactor.

The protein localises to the cytoplasm. The catalysed reaction is tRNA(Met) + L-methionine + ATP = L-methionyl-tRNA(Met) + AMP + diphosphate. Functionally, is required not only for elongation of protein synthesis but also for the initiation of all mRNA translation through initiator tRNA(fMet) aminoacylation. The protein is Methionine--tRNA ligase (metG) of Campylobacter jejuni subsp. jejuni serotype O:2 (strain ATCC 700819 / NCTC 11168).